Reading from the N-terminus, the 307-residue chain is Protein phosphatase EYA (307 aa).

The interval 1-15 is necessary for optimum phosphatase activity; it reads MNNDTSKKLGTLVSD. D25 functions as the Nucleophile in the catalytic mechanism. Residues D25, D27, and D253 each contribute to the Mg(2+) site. The active-site Proton donor is the D27.

The protein belongs to the HAD-like hydrolase superfamily. EYA family. The cofactor is Mg(2+).

The enzyme catalyses O-phospho-L-tyrosyl-[protein] + H2O = L-tyrosyl-[protein] + phosphate. With respect to regulation, inhibited by EDTA. Possesses phosphatase activity toward para-nitrophenyl phosphate (pNPP) in vitro. Possesses phosphatase activity toward several phosphotyrosine-containing peptides in vitro, with low peptide substrate specificity. In Arabidopsis thaliana (Mouse-ear cress), this protein is Protein phosphatase EYA.